A 552-amino-acid chain; its full sequence is Ribulokinase (552 aa).

Belongs to the ribulokinase family.

It catalyses the reaction D-ribulose + ATP = D-ribulose 5-phosphate + ADP + H(+). The enzyme catalyses L-ribulose + ATP = L-ribulose 5-phosphate + ADP + H(+). The protein operates within carbohydrate degradation; L-arabinose degradation via L-ribulose; D-xylulose 5-phosphate from L-arabinose (bacterial route): step 2/3. In Bacillus licheniformis (strain ATCC 14580 / DSM 13 / JCM 2505 / CCUG 7422 / NBRC 12200 / NCIMB 9375 / NCTC 10341 / NRRL NRS-1264 / Gibson 46), this protein is Ribulokinase.